The sequence spans 581 residues: Threonine--tRNA ligase (581 aa).

Positions 185 to 478 (DHRKLGKELD…LIEHYGGAFP (294 aa)) are catalytic. Residues Cys-278, His-329, and His-455 each contribute to the Zn(2+) site.

Belongs to the class-II aminoacyl-tRNA synthetase family. Homodimer. The cofactor is Zn(2+).

Its subcellular location is the cytoplasm. It carries out the reaction tRNA(Thr) + L-threonine + ATP = L-threonyl-tRNA(Thr) + AMP + diphosphate + H(+). Catalyzes the attachment of threonine to tRNA(Thr) in a two-step reaction: L-threonine is first activated by ATP to form Thr-AMP and then transferred to the acceptor end of tRNA(Thr). Also edits incorrectly charged L-seryl-tRNA(Thr). The chain is Threonine--tRNA ligase from Borreliella afzelii (strain PKo) (Borrelia afzelii).